A 333-amino-acid chain; its full sequence is MACSRPPSQCEPTSLPPGPPAGRRHLPLSRRRREMSSNKEQRSAVFVILFALITILILYSSNSANEVFHYGSLRGRSRRPVNLKKWSITDGYVPILGNKTLPSRCHQCVIVSSSSHLLGTKLGPEIERAECTIRMNDAPTTGYSADVGNKTTYRVVAHSSVFRVLRRPQEFVNRTPETVFIFWGPPSKMQKPQGSLVRVIQRAGLVFPNMEAYAVSPGRMRQFDDLFRGETGKDREKSHSWLSTGWFTMVIAVELCDHVHVYGMVPPNYCSQRPRLQRMPYHYYEPKGPDECVTYIQNEHSRKGNHHRFITEKRVFSSWAQLYGITFSHPSWT.

Over residues 1–12 (MACSRPPSQCEP) the composition is skewed to polar residues. The disordered stretch occupies residues 1–26 (MACSRPPSQCEPTSLPPGPPAGRRHL). The Cytoplasmic segment spans residues 1 to 43 (MACSRPPSQCEPTSLPPGPPAGRRHLPLSRRRREMSSNKEQRS). Residues 44–64 (AVFVILFALITILILYSSNSA) form a helical; Signal-anchor for type II membrane protein membrane-spanning segment. Over 65–333 (NEVFHYGSLR…GITFSHPSWT (269 aa)) the chain is Lumenal. A glycan (N-linked (GlcNAc...) asparagine) is linked at Asn-98. The cysteines at positions 108 and 256 are disulfide-linked.

The protein belongs to the glycosyltransferase 29 family. In terms of tissue distribution, expressed in kidney, in proximal tubule epithelial cells. Expressed in colon cell lines.

It localises to the golgi apparatus membrane. It catalyses the reaction a ganglioside GM1b (d18:1(4E)) + CMP-N-acetyl-beta-neuraminate = a ganglioside GD1alpha (d18:1(4E)) + CMP + H(+). The enzyme catalyses N-acetyl-alpha-neuraminosyl-(2-&gt;3)-beta-D-galactosyl-(1-&gt;3)-N-acetyl-beta-D-glucosaminyl-(1-&gt;3)-beta-D-galactosyl-(1-&gt;4)-beta-D-glucosyl-(1&lt;-&gt;1')-N-acyl-sphing-4-enine + CMP-N-acetyl-beta-neuraminate = N-acetyl-alpha-neuraminosyl-(2-&gt;3)-beta-D-galactosyl-(1-&gt;3)-[N-acetyl-alpha-neuraminosyl-(2-&gt;6)]-N-acetyl-beta-D-glucosaminyl-(1-&gt;3)-beta-D-galactosyl-(1-&gt;4)-beta-D-glucosyl-(1&lt;-&gt;1')-N-acyl-sphing-4-enine + CMP + H(+). The catalysed reaction is a globoside MSGG + CMP-N-acetyl-beta-neuraminate = a globoside DSGG + CMP + H(+). It carries out the reaction a ganglioside GD1a (d18:1(4E)) + CMP-N-acetyl-beta-neuraminate = a ganglioside GT1aalpha (d18:1(4E)) + CMP + H(+). It catalyses the reaction a ganglioside GT1b (d18:1(4E)) + CMP-N-acetyl-beta-neuraminate = a ganglioside GQ1balpha (d18:1(4E)) + CMP + H(+). The enzyme catalyses 3-O-[alpha-Neu5Ac-(2-&gt;3)-beta-D-Gal-(1-&gt;3)-alpha-D-GalNAc]-L-Ser-[protein] + CMP-N-acetyl-beta-neuraminate = a 3-O-{alpha-Neu5Ac-(2-&gt;3)-beta-D-Gal-(1-&gt;3)-[alpha-Neu5Ac-(2-&gt;6)]-alpha-D-GalNAc}-L-seryl-[protein] + CMP + H(+). The catalysed reaction is 3-O-[alpha-Neu5Ac-(2-&gt;3)-beta-D-Gal-(1-&gt;3)-alpha-D-GalNAc]-L-Thr-[protein] + CMP-N-acetyl-beta-neuraminate = a 3-O-{alpha-Neu5Ac-(2-&gt;3)-beta-D-Gal-(1-&gt;3)-[alpha-Neu5Ac-(2-&gt;6)]-alpha-D-GalNAc}-L-threonyl-[protein] + CMP + H(+). In terms of biological role, transfers the sialyl group (N-acetyl-alpha-neuraminyl or NeuAc) from CMP-NeuAc onto glycoproteins and glycolipids, forming an alpha-2,6-linkage. Produces branched type disialyl structures by transfer of a sialyl group onto the GalNAc or GlcNAc residue inside backbone core chains having a terminal sialic acid with an alpha-2,3-linkage on Gal. ST6GalNAcVI prefers glycolipids to glycoproteins, predominantly catalyzing the biosynthesis of ganglioside GD1alpha from GM1b. Besides GMb1, MSGG and other glycolipids, it shows activity towards sialyl Lc4Cer generating disialyl Lc4Cer, which can lead to the synthesis of disialyl Lewis a (Le(a)), suggested to be a cancer-associated antigen. Also has activity toward GD1a and GT1b, and can generate DSGG (disialylgalactosylgloboside) from MSGG (monosialylgalactosylgloboside). The polypeptide is Alpha-N-acetylgalactosaminide alpha-2,6-sialyltransferase 6 (ST6GALNAC6) (Homo sapiens (Human)).